The chain runs to 418 residues: Voltage-gated ClC-type chloride channel ClcB (418 aa).

Residues 1-4 lie on the Cytoplasmic side of the membrane; that stretch reads MFRR. The helical transmembrane segment at 5-25 threads the bilayer; sequence LLIATVVGILAAFAVAGFRHA. At 26–53 the chain is on the periplasmic side; that stretch reads MLLLEWLFLNNDSGSLVNAATNLSPWRR. Residues 54–74 form a helical membrane-spanning segment; that stretch reads LLTPALGGLAAGLLLMGWQKF. The Cytoplasmic segment spans residues 75–145; the sequence is TQQRPHAPTD…QRFTPRQEWK (71 aa). The chain crosses the membrane as a helical span at residues 146–166; that stretch reads LWIACGAAAGMAAAYRAPLAG. The Periplasmic segment spans residues 167-177; the sequence is SLFIAEVLFGT. Residues 178–200 traverse the membrane as a helical segment; it reads MMLASLGPVIISAVVALLVSNLI. The Cytoplasmic segment spans residues 201-221; it reads NHSDALLYSVQLSVTVQARDY. Residues 222 to 242 traverse the membrane as a helical segment; that stretch reads ALIISTGVLAGLCGPLLLTLM. The Periplasmic segment spans residues 243-257; that stretch reads NACHRGFVSLKLAPP. Residues 258 to 278 form a helical membrane-spanning segment; the sequence is WQLALGGLIVGLLSLFTPAVW. Over 279–290 the chain is Cytoplasmic; it reads GNGYSTVQSFLT. A helical membrane pass occupies residues 291–311; that stretch reads APPLLMIIAGIFLCKLCAVLA. Topologically, residues 312 to 315 are periplasmic; that stretch reads SSGS. Residues 316-336 form a helical membrane-spanning segment; sequence GAPGGVFTPTLFIGLAIGMLY. Over 337–351 the chain is Cytoplasmic; the sequence is GRSLGLWFPDGEEIT. A helical membrane pass occupies residues 352 to 372; sequence LLLGLTGMATLLAATTHAPIM. At 373-379 the chain is on the periplasmic side; sequence STLMICE. Residues 380 to 400 traverse the membrane as a helical segment; that stretch reads MTGEYQLLPGLLIACVIASVI. Residues 401–418 lie on the Cytoplasmic side of the membrane; that stretch reads SRTLHRDSIYRQHTAQHS.

It belongs to the chloride channel (TC 2.A.49) family. ClcB subfamily.

Its subcellular location is the cell inner membrane. Functionally, probably acts as an electrical shunt for an outwardly-directed proton pump that is linked to amino acid decarboxylation, as part of the extreme acid resistance (XAR) response. In Escherichia coli O157:H7, this protein is Voltage-gated ClC-type chloride channel ClcB (clcB).